The sequence spans 83 residues: CLAVATA3/ESR (CLE)-related protein 3 (83 aa).

Positions 1–24 (MASLKLWVCLVLLLVLELTSVHEC) are cleaved as a signal peptide. Residues 38-58 (RLKKIRRELFERLKEMKGRSE) are a coiled coil. The segment at 53-83 (MKGRSEGEETILGNTLDSKRLSPGGPDPRHH) is disordered. Hydroxyproline occurs at positions 75 and 78. O-linked (Ara...) hydroxyproline glycosylation is present at P78.

This sequence belongs to the CLV3/ESR signal peptide family. The O-glycosylation (arabinosylation) of the hydroxyproline Pro-78 enhances binding affinity of the CLE3p peptide for its receptor. Mostly expressed in roots, stems and apex, and, to a lower extent, in seedlings, leaves, flowers, siliques and pollen.

The protein localises to the secreted. It localises to the extracellular space. Functionally, extracellular signal peptide that regulates cell fate. In Arabidopsis thaliana (Mouse-ear cress), this protein is CLAVATA3/ESR (CLE)-related protein 3.